The following is a 75-amino-acid chain: Small ribosomal subunit protein bS18 (75 aa).

This sequence belongs to the bacterial ribosomal protein bS18 family. As to quaternary structure, part of the 30S ribosomal subunit. Forms a tight heterodimer with protein bS6.

In terms of biological role, binds as a heterodimer with protein bS6 to the central domain of the 16S rRNA, where it helps stabilize the platform of the 30S subunit. The polypeptide is Small ribosomal subunit protein bS18 (Acinetobacter baylyi (strain ATCC 33305 / BD413 / ADP1)).